The following is a 738-amino-acid chain: Multifunctional procollagen lysine hydroxylase and glycosyltransferase LH3 (738 aa).

An N-terminal signal peptide occupies residues 1 to 24 (MTSSGPGPRFLLLLPLLLPPAASA). Residues 25 to 290 (SDRPRGRDPV…FCNQDRRTLP (266 aa)) are required for glycosyltransferase activity. A UDP-binding site is contributed by 44 to 46 (VAT). A glycan (N-linked (GlcNAc...) asparagine) is linked at Asn63. Mn(2+) is bound by residues Asp112, Asp115, and His253. UDP is bound at residue 112 to 114 (DSY). 256–259 (GPTK) is a binding site for UDP. 2 cysteine pairs are disulfide-bonded: Cys279/Cys282 and Cys379/Cys385. The segment at 295–520 (PPRVFLAVFV…EFGRLLATSR (226 aa)) is accessory region. Asn548 is a glycosylation site (N-linked (GlcNAc...) asparagine). Cys563 and Cys698 are joined by a disulfide. Arg599 and Tyr656 together coordinate 2-oxoglutarate. In terms of domain architecture, Fe2OG dioxygenase spans 647-738 (RAVMNFVVRY…RYIMVSFVDP (92 aa)). Residues His667 and Asp669 each contribute to the Fe cation site. Positions 672-715 (TFTLNVALNHKGLDYEGGGCRFLRYDCVISSPRKGWALLHPGRL) are important for dimerization. Asn676 is a binding site for 2-oxoglutarate. Residue His719 coordinates Fe cation. Position 729 (Arg729) interacts with 2-oxoglutarate.

In terms of assembly, homodimer. Fe(2+) serves as cofactor. It depends on L-ascorbate as a cofactor. The cofactor is Mn(2+).

Its subcellular location is the rough endoplasmic reticulum. The protein resides in the endoplasmic reticulum lumen. The protein localises to the endoplasmic reticulum membrane. It localises to the secreted. It is found in the extracellular space. It catalyses the reaction L-lysyl-[collagen] + 2-oxoglutarate + O2 = (5R)-5-hydroxy-L-lysyl-[collagen] + succinate + CO2. The enzyme catalyses (5R)-5-hydroxy-L-lysyl-[collagen] + UDP-alpha-D-galactose = (5R)-5-O-(beta-D-galactosyl)-5-hydroxy-L-lysyl-[collagen] + UDP + H(+). It carries out the reaction (5R)-5-O-(beta-D-galactosyl)-5-hydroxy-L-lysyl-[collagen] + UDP-alpha-D-glucose = (5R)-5-O-[alpha-D-glucosyl-(1-&gt;2)-beta-D-galactosyl]-5-hydroxy-L-lysyl-[collagen] + UDP + H(+). Functionally, multifunctional enzyme that catalyzes a series of post-translational modifications on Lys residues in procollagen. Plays a redundant role in catalyzing the formation of hydroxylysine residues in -Xaa-Lys-Gly- sequences in collagens. Plays a redundant role in catalyzing the transfer of galactose onto hydroxylysine groups, giving rise to galactosyl 5-hydroxylysine. Has an essential role by catalyzing the subsequent transfer of glucose moieties, giving rise to 1,2-glucosylgalactosyl-5-hydroxylysine residues. Catalyzes hydroxylation and glycosylation of Lys residues in the MBL1 collagen-like domain, giving rise to hydroxylysine and 1,2-glucosylgalactosyl-5-hydroxylysine residues. Catalyzes hydroxylation and glycosylation of Lys residues in the ADIPOQ collagen-like domain, giving rise to hydroxylysine and 1,2-glucosylgalactosyl-5-hydroxylysine residues. Essential for normal biosynthesis and secretion of type IV collagens. Essential for normal formation of basement membranes. The sequence is that of Multifunctional procollagen lysine hydroxylase and glycosyltransferase LH3 (PLOD3) from Pongo abelii (Sumatran orangutan).